Reading from the N-terminus, the 582-residue chain is ATP-dependent lipid A-core flippase (582 aa).

The next 6 helical transmembrane spans lie at leucine 27–leucine 48, phenylalanine 63–serine 85, valine 144–serine 168, valine 170–arginine 188, leucine 244–valine 266, and threonine 283–threonine 302. One can recognise an ABC transmembrane type-1 domain in the interval valine 28–arginine 310. An ABC transporter domain is found at valine 342–isoleucine 578. ATP is bound at residue glycine 376–serine 383.

This sequence belongs to the ABC transporter superfamily. Lipid exporter (TC 3.A.1.106) family. Homodimer.

Its subcellular location is the cell inner membrane. The enzyme catalyses ATP + H2O + lipid A-core oligosaccharideSide 1 = ADP + phosphate + lipid A-core oligosaccharideSide 2.. Its function is as follows. Involved in lipopolysaccharide (LPS) biosynthesis. Translocates lipid A-core from the inner to the outer leaflet of the inner membrane. Transmembrane domains (TMD) form a pore in the inner membrane and the ATP-binding domain (NBD) is responsible for energy generation. Shows ATPase activity. In Vibrio cholerae serotype O1 (strain ATCC 39315 / El Tor Inaba N16961), this protein is ATP-dependent lipid A-core flippase.